We begin with the raw amino-acid sequence, 700 residues long: Methionine--tRNA ligase (700 aa).

Residues Pro12–His22 carry the 'HIGH' region motif. Positions 143, 146, 156, and 159 each coordinate Zn(2+). Residues Lys348–Ser352 carry the 'KMSKS' region motif. Lys351 contacts ATP. A tRNA-binding domain is found at Asp594–His700.

It belongs to the class-I aminoacyl-tRNA synthetase family. MetG type 1 subfamily. As to quaternary structure, homodimer. The cofactor is Zn(2+).

Its subcellular location is the cytoplasm. It catalyses the reaction tRNA(Met) + L-methionine + ATP = L-methionyl-tRNA(Met) + AMP + diphosphate. Is required not only for elongation of protein synthesis but also for the initiation of all mRNA translation through initiator tRNA(fMet) aminoacylation. The protein is Methionine--tRNA ligase of Albidiferax ferrireducens (strain ATCC BAA-621 / DSM 15236 / T118) (Rhodoferax ferrireducens).